The primary structure comprises 429 residues: Phosphomethylpyrimidine synthase (429 aa).

Substrate-binding positions include asparagine 66, methionine 95, tyrosine 124, histidine 163, 185 to 187 (SRG), 226 to 229 (DAMR), and glutamate 265. Histidine 269 lines the Zn(2+) pocket. Tyrosine 292 provides a ligand contact to substrate. Residue histidine 333 coordinates Zn(2+). Residues cysteine 409, cysteine 412, and cysteine 416 each coordinate [4Fe-4S] cluster.

The protein belongs to the ThiC family. It depends on [4Fe-4S] cluster as a cofactor.

The enzyme catalyses 5-amino-1-(5-phospho-beta-D-ribosyl)imidazole + S-adenosyl-L-methionine = 4-amino-2-methyl-5-(phosphooxymethyl)pyrimidine + CO + 5'-deoxyadenosine + formate + L-methionine + 3 H(+). The protein operates within cofactor biosynthesis; thiamine diphosphate biosynthesis. In terms of biological role, catalyzes the synthesis of the hydroxymethylpyrimidine phosphate (HMP-P) moiety of thiamine from aminoimidazole ribotide (AIR) in a radical S-adenosyl-L-methionine (SAM)-dependent reaction. In Methanopyrus kandleri (strain AV19 / DSM 6324 / JCM 9639 / NBRC 100938), this protein is Phosphomethylpyrimidine synthase.